Reading from the N-terminus, the 529-residue chain is Bifunctional purine biosynthesis protein PurH (529 aa).

Residues 1–148 (MNNARPIRRA…KNHKDTTIIV (148 aa)) form the MGS-like domain.

It belongs to the PurH family.

It catalyses the reaction (6R)-10-formyltetrahydrofolate + 5-amino-1-(5-phospho-beta-D-ribosyl)imidazole-4-carboxamide = 5-formamido-1-(5-phospho-D-ribosyl)imidazole-4-carboxamide + (6S)-5,6,7,8-tetrahydrofolate. The catalysed reaction is IMP + H2O = 5-formamido-1-(5-phospho-D-ribosyl)imidazole-4-carboxamide. The protein operates within purine metabolism; IMP biosynthesis via de novo pathway; 5-formamido-1-(5-phospho-D-ribosyl)imidazole-4-carboxamide from 5-amino-1-(5-phospho-D-ribosyl)imidazole-4-carboxamide (10-formyl THF route): step 1/1. Its pathway is purine metabolism; IMP biosynthesis via de novo pathway; IMP from 5-formamido-1-(5-phospho-D-ribosyl)imidazole-4-carboxamide: step 1/1. The chain is Bifunctional purine biosynthesis protein PurH from Shewanella piezotolerans (strain WP3 / JCM 13877).